Here is a 465-residue protein sequence, read N- to C-terminus: VGFKAGVKDYKLTYYTPDYETKDTDILAAFRVTPQPGVPPEEAGAAVAAESSTGTWTTVWTDGLTSLDRYKGRCYDIEPVAGEENQYIAYVAYPLDLFEEGSVTNMFTSIVGNVFGFKALRALRLEDLRIPPAYSKTFQGPPHGIQVERDKLNKYGRPLLGCTIKPKLGLSAKNYGRAVYECLRGGLDFTKDDENVNSQPFMRWRDRFLFCAEALYKAQAETGEIKGHYLNATAGTCEEMIKRAVFARELGVPIVMHDYLTGGFTANTSLAHYCRDNGLLLHIHRAMHAVIDRQKNHGIHFRVLAKALRMSGGDHIHSGTVVGKLEGERDITLGFVDLLRDDFIEKDRSRGIYFTQDWVSLPGVLPVASGGIHVWHMPALTEIFGDDSVLQFGGGTLGHPWGNAPGAVANRVALEACVQARNEGRDLAREGNEIIREASKWSPELAAACEVWKEIKFEFQAMDTL.

An N6,N6,N6-trimethyllysine modification is found at Lys-4. Substrate contacts are provided by Asn-113 and Thr-163. Lys-165 functions as the Proton acceptor in the catalytic mechanism. Lys-167 is a binding site for substrate. Residues Lys-191, Asp-193, and Glu-194 each coordinate Mg(2+). N6-carboxylysine is present on Lys-191. The Proton acceptor role is filled by His-284. Residues Arg-285, His-317, and Ser-369 each coordinate substrate.

It belongs to the RuBisCO large chain family. Type I subfamily. In terms of assembly, heterohexadecamer of 8 large chains and 8 small chains; disulfide-linked. The disulfide link is formed within the large subunit homodimers. Mg(2+) is required as a cofactor. In terms of processing, the disulfide bond which can form in the large chain dimeric partners within the hexadecamer appears to be associated with oxidative stress and protein turnover.

Its subcellular location is the plastid. It localises to the chloroplast. The enzyme catalyses 2 (2R)-3-phosphoglycerate + 2 H(+) = D-ribulose 1,5-bisphosphate + CO2 + H2O. It catalyses the reaction D-ribulose 1,5-bisphosphate + O2 = 2-phosphoglycolate + (2R)-3-phosphoglycerate + 2 H(+). Functionally, ruBisCO catalyzes two reactions: the carboxylation of D-ribulose 1,5-bisphosphate, the primary event in carbon dioxide fixation, as well as the oxidative fragmentation of the pentose substrate in the photorespiration process. Both reactions occur simultaneously and in competition at the same active site. In Idesia polycarpa (Iigiri tree), this protein is Ribulose bisphosphate carboxylase large chain.